Reading from the N-terminus, the 120-residue chain is Cytochrome c2 iso-1 (120 aa).

Gln-1 bears the Pyrrolidone carboxylic acid mark. The heme c site is built by Cys-15, Cys-18, His-19, and Met-98.

Belongs to the cytochrome c family. Post-translationally, binds 1 heme c group covalently per subunit.

Cytochrome c2 is found mainly in purple, non-sulfur, photosynthetic bacteria where it functions as the electron donor to the oxidized bacteriochlorophyll in the photophosphorylation pathway. However, it may also have a role in the respiratory chain and is found in some non-photosynthetic bacteria. This is Cytochrome c2 iso-1 from Rhodospirillum centenum (Rhodocista centenaria).